The sequence spans 182 residues: Dirigent protein 5 (182 aa).

The signal sequence occupies residues 1–23 (MVGQMKSFLFLFVFLVLTKTVIS). C35 and C181 are disulfide-bonded. N54 and N118 each carry an N-linked (GlcNAc...) asparagine glycan.

Belongs to the plant dirigent protein family. As to quaternary structure, homodimer. Confined to shoot meristem, vascular region of cotyledons and siliques abscission zone.

The protein localises to the secreted. It localises to the extracellular space. It is found in the apoplast. In terms of biological role, dirigent proteins impart stereoselectivity on the phenoxy radical-coupling reaction, yielding optically active lignans from two molecules of coniferyl alcohol in the biosynthesis of lignans, flavonolignans, and alkaloids and thus plays a central role in plant secondary metabolism. Enantiocomplementary dirigent protein that mediates the laccase-catalyzed enantioselective oxidative phenol coupling of (E)-coniferyl alcohol to (-)-pinoresinol. The chain is Dirigent protein 5 (DIR5) from Arabidopsis thaliana (Mouse-ear cress).